Reading from the N-terminus, the 556-residue chain is Formate--tetrahydrofolate ligase (556 aa).

65-72 (TPAGEGKS) serves as a coordination point for ATP.

This sequence belongs to the formate--tetrahydrofolate ligase family.

It carries out the reaction (6S)-5,6,7,8-tetrahydrofolate + formate + ATP = (6R)-10-formyltetrahydrofolate + ADP + phosphate. Its pathway is one-carbon metabolism; tetrahydrofolate interconversion. This Streptococcus agalactiae serotype Ia (strain ATCC 27591 / A909 / CDC SS700) protein is Formate--tetrahydrofolate ligase.